A 264-amino-acid chain; its full sequence is ELL-associated factor 2 (264 aa).

Disordered regions lie at residues 114 to 154 and 169 to 264; these read EGSS…PSSP and MDQL…DSDD. The segment covering 117–142 has biased composition (polar residues); that stretch reads SKVQSRIEQQQQQIRNSSKTPNNIKN. Residues 173-196 show a composition bias toward low complexity; sequence SSSDSSSDSKSSSSSSSSSENSSS. Basic and acidic residues predominate over residues 228-238; the sequence is VPDKDASHNRS. A compositionally biased stretch (polar residues) spans 239-264; it reads QENSGHMMNTLRSDLQLSESGSDSDD.

Belongs to the EAF family.

The protein resides in the nucleus speckle. In terms of biological role, may act as a transcriptional transactivator. This Gallus gallus (Chicken) protein is ELL-associated factor 2 (EAF2).